The sequence spans 340 residues: Photosystem II assembly lipoprotein Ycf48 (340 aa).

The first 26 residues, 1–26 (MTSVLGLLKPLKKAIAAIAVLVLCIG), serve as a signal peptide directing secretion. C27 is lipidated: N-palmitoyl cysteine. C27 is lipidated: S-diacylglycerol cysteine.

It belongs to the Ycf48 family. In terms of assembly, part of early PSII assembly complexes which includes D1 (psbA) and PsbI; not found in mature PSII. Binds to the lumenal side of PSII complexes. Interacts with YidC.

It localises to the cellular thylakoid membrane. Its function is as follows. A factor required for optimal assembly of photosystem II (PSII), acting in the early stages of PSII assembly. Also plays a role in replacement of photodamaged D1 (psbA). Assists YidC in synthesis of chlorophyll-binding proteins. The sequence is that of Photosystem II assembly lipoprotein Ycf48 from Picosynechococcus sp. (strain ATCC 27264 / PCC 7002 / PR-6) (Agmenellum quadruplicatum).